We begin with the raw amino-acid sequence, 283 residues long: Putative sugar uptake protein BC_0219 (283 aa).

Helical transmembrane passes span 4 to 21, 26 to 48, 52 to 71, 84 to 106, 110 to 132, 151 to 173, 178 to 195, 208 to 230, 234 to 253, and 260 to 279; these read LLALLPAIAWGNILLVSV, GAYSQTVGMTIGALFFATIMYVF, ALTMTILIVGFISGLFWALG, VSTTVTISTGMQLVATSIFGVIA, WTTTTTIILGTIAILLIVVGVVF, LLTLIVSTFGYLVYVIIIRWYNI, AILPQAVGMFVGAVVLTS, ALSGLLWGTGNLFLLLSLPRVGV, FPLSQTGIVISTFGAIVFLG, and QLIFIALGSVLIIGGAVLLG.

This sequence belongs to the GRP transporter (TC 2.A.7.5) family.

The protein resides in the cell membrane. In Bacillus cereus (strain ATCC 14579 / DSM 31 / CCUG 7414 / JCM 2152 / NBRC 15305 / NCIMB 9373 / NCTC 2599 / NRRL B-3711), this protein is Putative sugar uptake protein BC_0219.